We begin with the raw amino-acid sequence, 668 residues long: Tastin (668 aa).

3 disordered regions span residues Met-1–Asn-102, Glu-154–Pro-177, and Phe-189–His-285. A Phosphoserine modification is found at Ser-16. Polar residues-rich tracts occupy residues Gln-27–Ser-37 and Pro-55–Leu-64. A Phosphoserine modification is found at Ser-97. Positions Gly-158–Ser-168 are enriched in polar residues. Phosphoserine is present on Ser-169. Composition is skewed to basic and acidic residues over residues Glu-227 to Thr-246 and Gly-269 to Gly-282. 3 positions are modified to phosphoserine: Ser-306, Ser-324, and Ser-338. 2 disordered regions span residues Ile-364–Leu-392 and Thr-462–Glu-502.

Directly binds bystin, and indirectly trophinin.

Its subcellular location is the cytoplasm. Could be involved with bystin and trophinin in a cell adhesion molecule complex that mediates an initial attachment of the blastocyst to uterine epithelial cells at the time of the embryo implantation. This chain is Tastin, found in Mus musculus (Mouse).